A 250-amino-acid chain; its full sequence is Triosephosphate isomerase (250 aa).

Residue 9 to 11 coordinates substrate; it reads NWK. Residue His-94 is the Electrophile of the active site. Residue Glu-166 is the Proton acceptor of the active site. Substrate-binding positions include Gly-172, Ser-212, and 233–234; that span reads GG.

This sequence belongs to the triosephosphate isomerase family. Homodimer.

It is found in the cytoplasm. The enzyme catalyses D-glyceraldehyde 3-phosphate = dihydroxyacetone phosphate. It participates in carbohydrate biosynthesis; gluconeogenesis. Its pathway is carbohydrate degradation; glycolysis; D-glyceraldehyde 3-phosphate from glycerone phosphate: step 1/1. In terms of biological role, involved in the gluconeogenesis. Catalyzes stereospecifically the conversion of dihydroxyacetone phosphate (DHAP) to D-glyceraldehyde-3-phosphate (G3P). The sequence is that of Triosephosphate isomerase from Thermus thermophilus (strain ATCC 27634 / DSM 579 / HB8).